Reading from the N-terminus, the 336-residue chain is Holliday junction branch migration complex subunit RuvB (336 aa).

A large ATPase domain (RuvB-L) region spans residues 4–185 (ADRLISADIQ…FGIVQRLEFY (182 aa)). ATP is bound by residues I24, R25, G66, K69, T70, T71, 132-134 (EDY), R175, Y185, and R222. Mg(2+) is bound at residue T70. Positions 186 to 256 (NVDDLQHIVA…IASKALDMLN (71 aa)) are small ATPAse domain (RuvB-S). Positions 259–336 (AAGFDYLDRK…RHFNRIMEAP (78 aa)) are head domain (RuvB-H). R295, R314, and R319 together coordinate DNA.

This sequence belongs to the RuvB family. As to quaternary structure, homohexamer. Forms an RuvA(8)-RuvB(12)-Holliday junction (HJ) complex. HJ DNA is sandwiched between 2 RuvA tetramers; dsDNA enters through RuvA and exits via RuvB. An RuvB hexamer assembles on each DNA strand where it exits the tetramer. Each RuvB hexamer is contacted by two RuvA subunits (via domain III) on 2 adjacent RuvB subunits; this complex drives branch migration. In the full resolvosome a probable DNA-RuvA(4)-RuvB(12)-RuvC(2) complex forms which resolves the HJ.

The protein localises to the cytoplasm. It carries out the reaction ATP + H2O = ADP + phosphate + H(+). Its function is as follows. The RuvA-RuvB-RuvC complex processes Holliday junction (HJ) DNA during genetic recombination and DNA repair, while the RuvA-RuvB complex plays an important role in the rescue of blocked DNA replication forks via replication fork reversal (RFR). RuvA specifically binds to HJ cruciform DNA, conferring on it an open structure. The RuvB hexamer acts as an ATP-dependent pump, pulling dsDNA into and through the RuvAB complex. RuvB forms 2 homohexamers on either side of HJ DNA bound by 1 or 2 RuvA tetramers; 4 subunits per hexamer contact DNA at a time. Coordinated motions by a converter formed by DNA-disengaged RuvB subunits stimulates ATP hydrolysis and nucleotide exchange. Immobilization of the converter enables RuvB to convert the ATP-contained energy into a lever motion, pulling 2 nucleotides of DNA out of the RuvA tetramer per ATP hydrolyzed, thus driving DNA branch migration. The RuvB motors rotate together with the DNA substrate, which together with the progressing nucleotide cycle form the mechanistic basis for DNA recombination by continuous HJ branch migration. Branch migration allows RuvC to scan DNA until it finds its consensus sequence, where it cleaves and resolves cruciform DNA. In Proteus mirabilis (strain HI4320), this protein is Holliday junction branch migration complex subunit RuvB.